The primary structure comprises 460 residues: MAVMKFTWRSIIPRCSKGIEEAEAEAEAETKKQDSKQGSFSRLAMIDFSYPSSMFTEDLSTSLAGSNLYVFTLEELKVITQCFSSANFLGEGGFGPVHKGFIDDNLRPGLEAQPVAVKLLDLEGLQGHREWLTEVVFLAQLSHPHLVKLIGYCCEDENRLLVYEYMPRGSLENQLFAKYSVPLPWSTRMKIALGAAKGLAYLHEAEKPVIYRDFKASNILLDSDYSAKLSDFGLAKDGPEGDKTHVSTRVMGTRGYAAPEYIMTGHLTAMSDVYSFGVVLLELLTGRRSLDKSRSPREQNLAEWARPMLNESRRLARIMDPKLEGQYSETGARKAAALAYQCLSHRAKQRPKMSDVVNILEPLLDYGETSVASFVYTVPTHQKGGSPPKDDTDTKECEAKTELKKENGHHRNRHHHRRSHKSRDGHRHQNKSSSQSSVHSENDTSKQNLENGSNEECNID.

A Protein kinase domain is found at 83 to 364; that stretch reads FSSANFLGEG…DVVNILEPLL (282 aa). ATP is bound by residues 89–97 and Lys-118; that span reads LGEGGFGPV. Phosphotyrosine occurs at positions 163 and 165. Asp-213 functions as the Proton acceptor in the catalytic mechanism.

Belongs to the protein kinase superfamily. Ser/Thr protein kinase family. As to quaternary structure, interacts with the V.dahliae elicitor EPD1 (AC G2WWH6). Post-translationally, phosphorylated at Tyr-163 and Tyr-165 in the presence of pathogen-associated molecular patterns (PAMPs); this triggers the expression of pathogenesis-related genes. As to expression, mostly expressed in roots and, to a lesser extent, in leaves.

The protein localises to the cell membrane. It carries out the reaction L-seryl-[protein] + ATP = O-phospho-L-seryl-[protein] + ADP + H(+). The enzyme catalyses L-threonyl-[protein] + ATP = O-phospho-L-threonyl-[protein] + ADP + H(+). Functionally, required for pathogen-associated molecular pattern (PAMP, e.g. chitin and flg22)-triggered immunity (PTI) involving reactive oxygen species (ROS) accumulation and triggering plant defense, including defense-related gene expression (e.g. PR1 and LOX). Ensures specific recognition of the EPD1 effector of Verticillium dahliae, resulting in a hypersensitive response known as effector-triggered immunity (ETI), characterized by the activation of programmed cell death to limit infection by the pathogen. Priming plants with the incompatible pathogen V.dahliae leads to an increased resistance to compatible pathogens, as a result of systemic acquired resistance (SAR). This is EPD1-interacting receptor-like cytoplasmic serine/threonine-protein kinase 5D from Gossypium barbadense (Sea Island cotton).